The sequence spans 483 residues: 6-phosphogluconate dehydrogenase, decarboxylating (483 aa).

NADP(+) contacts are provided by residues 10 to 15 (GLAVMG) and 33 to 35 (NRT). Lys-38 carries the N6-acetyllysine modification. A Phosphoserine modification is found at Ser-57. Lys-59 carries the N6-acetyllysine modification. Residues 75-77 (VKA) and Asn-103 each bind NADP(+). Substrate is bound by residues Asn-103 and 129 to 131 (SGG). Ser-129 is subject to Phosphoserine. Lys-184 (proton acceptor) is an active-site residue. Position 187 to 188 (187 to 188 (HN)) interacts with substrate. Residue Glu-191 is the Proton donor of the active site. Residues Tyr-192, Lys-261, and Arg-288 each coordinate substrate. Lys-309 carries the post-translational modification N6-acetyllysine. Positions 447 and 453 each coordinate substrate. 478–481 (SSSY) contributes to the NADP(+) binding site.

Belongs to the 6-phosphogluconate dehydrogenase family. As to quaternary structure, homodimer.

The protein localises to the cytoplasm. The enzyme catalyses 6-phospho-D-gluconate + NADP(+) = D-ribulose 5-phosphate + CO2 + NADPH. It participates in carbohydrate degradation; pentose phosphate pathway; D-ribulose 5-phosphate from D-glucose 6-phosphate (oxidative stage): step 3/3. In terms of biological role, catalyzes the oxidative decarboxylation of 6-phosphogluconate to ribulose 5-phosphate and CO(2), with concomitant reduction of NADP to NADPH. The chain is 6-phosphogluconate dehydrogenase, decarboxylating (PGD) from Homo sapiens (Human).